The primary structure comprises 124 residues: RNA polymerase-binding protein RbpA (124 aa).

Zn(2+)-binding residues include Cys-34, His-38, Cys-56, and Cys-59. Residues 73-124 (EKKAKPARTHWDMLMERRTREELEEVLEERLAVLRSGAMNIAVHPRDSRKSA) form a sufficient for interaction with HrdB (SigA) region.

It belongs to the RNA polymerase-binding protein RbpA family. In terms of assembly, homodimer. Forms a complex with the RNAP, and a complex with RNAP plus principal sigma factor HrdB associated with promoter. Binds to free principal sigma factors HrdB and HrdA, probably via the sigma-2 domain, but not to 6 other sigma factors tested. The cofactor is Zn(2+).

Its function is as follows. Binds to RNA polymerase (RNAP), stimulating transcription from principal, but not alternative sigma factor promoters. Stimulates transcription from several principal sigma factor HrdB (SigA)-dependent promoters but not from a SigR-dependent promoter. Stimulation occurs in the presence of the transcription initiation inhibitor rifampicin (Rif). The chain is RNA polymerase-binding protein RbpA from Streptomyces coelicolor (strain ATCC BAA-471 / A3(2) / M145).